Consider the following 63-residue polypeptide: Sperm protamine P1 (63 aa).

The interval 1–63 (MARYRRHSRS…RYSRRGRRRY (63 aa)) is disordered.

The protein belongs to the protamine P1 family. In terms of tissue distribution, testis.

It localises to the nucleus. Its subcellular location is the chromosome. Its function is as follows. Protamines substitute for histones in the chromatin of sperm during the haploid phase of spermatogenesis. They compact sperm DNA into a highly condensed, stable and inactive complex. This is Sperm protamine P1 (PRM1) from Phascogale tapoatafa (Common wambenger).